The chain runs to 85 residues: DNA-directed RNA polymerase subunit omega (85 aa).

Belongs to the RNA polymerase subunit omega family. The RNAP catalytic core consists of 2 alpha, 1 beta, 1 beta' and 1 omega subunit. When a sigma factor is associated with the core the holoenzyme is formed, which can initiate transcription.

The catalysed reaction is RNA(n) + a ribonucleoside 5'-triphosphate = RNA(n+1) + diphosphate. Its function is as follows. Promotes RNA polymerase assembly. Latches the N- and C-terminal regions of the beta' subunit thereby facilitating its interaction with the beta and alpha subunits. This is DNA-directed RNA polymerase subunit omega from Latilactobacillus sakei subsp. sakei (strain 23K) (Lactobacillus sakei subsp. sakei).